The sequence spans 145 residues: Putative antiporter subunit mnhG2 (145 aa).

A run of 3 helical transmembrane segments spans residues 11-31 (IAAV…IGIV), 51-71 (VLLT…FFSV), and 72-92 (RLLL…HLVA).

It belongs to the CPA3 antiporters (TC 2.A.63) subunit G family. As to quaternary structure, may form a heterooligomeric complex that consists of seven subunits: mnhA2, mnhB2, mnhC2, mnhD2, mnhE2, mnhF2 and mnhG2.

The protein resides in the cell membrane. This Staphylococcus aureus (strain JH9) protein is Putative antiporter subunit mnhG2 (mnhG2).